A 1579-amino-acid chain; its full sequence is Eukaryotic translation initiation factor 4 gamma 3 (1579 aa).

Disordered stretches follow at residues 1 to 35 (MNSQ…RPGV) and 128 to 326 (TQQQ…GPSL). The span at 10–25 (PFFQRPQIQPPRAAIP) shows a compositional bias: low complexity. Positions 26–35 (NSSPSIRPGV) are enriched in polar residues. The tract at residues 134–162 (PAKREKKTIRIRDPNQGGKDITEEIMSGG) is PABPC1-binding. A compositionally biased stretch (pro residues) spans 167-183 (PTPPIGRPASTPTPPQQ). Phosphothreonine is present on Thr168. Residues Ser230, Ser232, and Ser267 each carry the phosphoserine modification. The segment covering 266–292 (SSPTSLPPLARSSLPSPMSAALSSQPL) has biased composition (low complexity). Basic and acidic residues predominate over residues 295–308 (AEDKCELPSSKEED). Residues 315–326 (PTSCTAASGPSL) show a composition bias toward polar residues. Residues Ser436, Ser470, Ser472, and Ser490 each carry the phosphoserine modification. Basic and acidic residues predominate over residues 454–470 (RTCLSKDAKEMQDKAES). Disordered regions lie at residues 454–615 (RTCL…DTEG), 681–706 (RQTP…QRRE), and 724–744 (AENA…PESI). Acidic residues predominate over residues 471-480 (ESDGQAEETA). The segment covering 481–501 (DPQSLHSGRSPAPVQTATTAP) has biased composition (polar residues). Basic and acidic residues-rich tracts occupy residues 506 to 515 (KTKEQTRTPD) and 549 to 563 (SERD…KAEE). Residues 589 to 598 (SGSADSSADG) are compositionally biased toward low complexity. Basic and acidic residues predominate over residues 606 to 615 (ESWKPADTEG). Residues 614–625 (EGKKQYDREFLL) are EIF4E-binding. Residues 694–1014 (VGPRRSQPGQ…EQRKVQQLMT (321 aa)) are eIF3/EIF4A-binding. HEAT repeat units follow at residues 740–778 (DPES…LTVD), 779–826 (TEER…GNTV), 827–900 (NFRK…LKML), 901–939 (TEAI…DFEK), and 940–979 (AKPR…LCNW). Residues 750–978 (FRKVRSILNK…QDVIDLRLCN (229 aa)) form the MIF4G domain. Residues 855-871 (KELEAASAPEERTRLHD) show a composition bias toward basic and acidic residues. The segment at 855 to 875 (KELEAASAPEERTRLHDELEE) is disordered. A coiled-coil region spans residues 989 to 1018 (KTIEQIHKEAKIEEQEEQRKVQQLMTKEKR). Disordered regions lie at residues 1009-1037 (VQQL…QGAK) and 1067-1214 (LGSW…LSEE). The segment covering 1086–1098 (LRSSASSLNRFSP) has biased composition (low complexity). Ser1150 carries the post-translational modification Phosphoserine; by CaMK1. 2 stretches are compositionally biased toward basic and acidic residues: residues 1150-1169 (SSKD…EMLE) and 1179-1197 (DAER…ELAK). Residues 1154 to 1176 (LLDNQSQEEQRREMLETVKQLTG) adopt a coiled-coil conformation. Position 1212 is a phosphoserine (Ser1212). The MI domain occupies 1215–1337 (EVERKSKSII…SMRELIVEFS (123 aa)). The stretch at 1406 to 1438 (SSEALSKKELSAEELSQRLEKLIMEEKADDERI) forms a coiled coil. A W2 domain is found at 1410-1579 (LSKKELSAEE…REAEEESEDN (170 aa)). Residues 1427–1579 (LIMEEKADDE…REAEEESEDN (153 aa)) are EIF4A-binding. Positions 1565–1579 (FFTWLREAEEESEDN) are necessary but not sufficient for MKNK1-binding.

This sequence belongs to the eukaryotic initiation factor 4G family. Interacts with EIF4A, EIF4E, eIF3 and PABPC1. Part of a complex with EIF4E. eIF4F is a multi-subunit complex, the composition of which varies with external and internal environmental conditions. It is composed of at least EIF4A, EIF4E and EIF4G1/EIF4G3. EIF4G1/EIF4G3 interacts through its C-terminus with the serine/threonine kinases MKNK1, and with MKNK2. Appears to act as a scaffold protein, holding these enzymes in place to phosphorylate eIF4E. Non-phosphorylated EIF4EBP1 competes with EIF4G1/EIFG3 to interact with EIF4E; insulin stimulated MAP-kinase (MAPK1 and MAPK3) phosphorylation of EIF4EBP1 causes dissociation of the complex allowing EIF4G1/EIF4G3 to bind and consequent initiation of translation. EIF4G1/EIF4G3 interacts with PABPC1 to bring about circularization of the mRNA. Interacts with FXR1; promoting translation of FXR1 target mRNAs.

Its function is as follows. Component of the protein complex eIF4F, which is involved in the recognition of the mRNA cap, ATP-dependent unwinding of 5'-terminal secondary structure and recruitment of mRNA to the ribosome. Functional homolog of EIF4G1. This is Eukaryotic translation initiation factor 4 gamma 3 (Eif4g3) from Mus musculus (Mouse).